The sequence spans 344 residues: Protein-glutamate methylesterase/protein-glutamine glutaminase (344 aa).

Residues 7–124 form the Response regulatory domain; the sequence is RVLVVDDSAF…SLTFRQVAPE (118 aa). D58 carries the 4-aspartylphosphate modification. One can recognise a CheB-type methylesterase domain in the interval 154–344; the sequence is PAVSGKIVVI…KIPEKLIELV (191 aa). Active-site residues include S166, H193, and D289.

The protein belongs to the CheB family. Phosphorylated by CheA. Phosphorylation of the N-terminal regulatory domain activates the methylesterase activity.

It localises to the cytoplasm. The enzyme catalyses [protein]-L-glutamate 5-O-methyl ester + H2O = L-glutamyl-[protein] + methanol + H(+). The catalysed reaction is L-glutaminyl-[protein] + H2O = L-glutamyl-[protein] + NH4(+). Involved in chemotaxis. Part of a chemotaxis signal transduction system that modulates chemotaxis in response to various stimuli. Catalyzes the demethylation of specific methylglutamate residues introduced into the chemoreceptors (methyl-accepting chemotaxis proteins or MCP) by CheR. Also mediates the irreversible deamidation of specific glutamine residues to glutamic acid. This Thermotoga maritima (strain ATCC 43589 / DSM 3109 / JCM 10099 / NBRC 100826 / MSB8) protein is Protein-glutamate methylesterase/protein-glutamine glutaminase.